The following is a 406-amino-acid chain: Proteasome-activating nucleotidase 1 (406 aa).

Residues 1 to 12 (MTDTVEDVELPY) show a composition bias toward acidic residues. The tract at residues 1–20 (MTDTVEDVELPYDDSASQQD) is disordered. The stretch at 12-70 (YDDSASQQDKLEALEEQLSTLEEENEEMRDRLLDANAENNKYQQKLERLSHENKKLKQS) forms a coiled coil. ATP-binding positions include 192–197 (GTGKTL) and His331. The segment at 385–406 (AREKLDQDSEPAAATDVSRTFA) is disordered. The segment at 404–406 (TFA) is docks into pockets in the proteasome alpha-ring to cause gate opening.

This sequence belongs to the AAA ATPase family. In terms of assembly, homohexamer. The hexameric complex has a two-ring architecture resembling a top hat that caps the 20S proteasome core at one or both ends. Upon ATP-binding, the C-terminus of PAN interacts with the alpha-rings of the proteasome core by binding to the intersubunit pockets.

It localises to the cytoplasm. Its function is as follows. ATPase which is responsible for recognizing, binding, unfolding and translocation of substrate proteins into the archaeal 20S proteasome core particle. Is essential for opening the gate of the 20S proteasome via an interaction with its C-terminus, thereby allowing substrate entry and access to the site of proteolysis. Thus, the C-termini of the proteasomal ATPase function like a 'key in a lock' to induce gate opening and therefore regulate proteolysis. Unfolding activity requires energy from ATP hydrolysis, whereas ATP binding alone promotes ATPase-20S proteasome association which triggers gate opening, and supports translocation of unfolded substrates. The sequence is that of Proteasome-activating nucleotidase 1 from Halobacterium salinarum (strain ATCC 700922 / JCM 11081 / NRC-1) (Halobacterium halobium).